A 275-amino-acid polypeptide reads, in one-letter code: Small ribosomal subunit protein uS2 (275 aa).

The tract at residues 226-275 (AAAPNSASVREEEFSAEAGDEGKGRRAPAKKATEKKADAPAAAPEAPAAE) is disordered. Positions 264-275 (APAAAPEAPAAE) are enriched in low complexity.

It belongs to the universal ribosomal protein uS2 family.

The sequence is that of Small ribosomal subunit protein uS2 from Xanthomonas campestris pv. campestris (strain ATCC 33913 / DSM 3586 / NCPPB 528 / LMG 568 / P 25).